Reading from the N-terminus, the 377-residue chain is Nitric oxide reductase FlRd-NAD(+) reductase (377 aa).

The protein belongs to the FAD-dependent oxidoreductase family. The cofactor is FAD.

It is found in the cytoplasm. It carries out the reaction 2 reduced [nitric oxide reductase rubredoxin domain] + NAD(+) + H(+) = 2 oxidized [nitric oxide reductase rubredoxin domain] + NADH. It participates in nitrogen metabolism; nitric oxide reduction. Its function is as follows. One of at least two accessory proteins for anaerobic nitric oxide (NO) reductase. Reduces the rubredoxin moiety of NO reductase. This Salmonella heidelberg (strain SL476) protein is Nitric oxide reductase FlRd-NAD(+) reductase.